We begin with the raw amino-acid sequence, 555 residues long: Urocanate hydratase (555 aa).

Residues 53–54, Q131, 177–179, E197, R202, 243–244, 264–268, 274–275, and Y323 each bind NAD(+); these read GG, GMG, NA, QTSAH, and YL. Residue C411 is part of the active site. G493 lines the NAD(+) pocket.

The protein belongs to the urocanase family. The cofactor is NAD(+).

It localises to the cytoplasm. The enzyme catalyses 4-imidazolone-5-propanoate = trans-urocanate + H2O. It participates in amino-acid degradation; L-histidine degradation into L-glutamate; N-formimidoyl-L-glutamate from L-histidine: step 2/3. Its function is as follows. Catalyzes the conversion of urocanate to 4-imidazolone-5-propionate. The chain is Urocanate hydratase from Maricaulis maris (strain MCS10) (Caulobacter maris).